Reading from the N-terminus, the 443-residue chain is Ribosomal protein uS12 methylthiotransferase RimO (443 aa).

One can recognise an MTTase N-terminal domain in the interval 5 to 116; sequence PTIAINHLGC…IVDIIRRTEQ (112 aa). Positions 14, 50, 79, 154, 158, and 161 each coordinate [4Fe-4S] cluster. Positions 140–369 constitute a Radical SAM core domain; it reads TTNEAIAYLR…MALQQPISAQ (230 aa). The TRAM domain maps to 372–438; sequence AACLGQTLDV…DYDLYGMTAE (67 aa).

The protein belongs to the methylthiotransferase family. RimO subfamily. The cofactor is [4Fe-4S] cluster.

It is found in the cytoplasm. It catalyses the reaction L-aspartate(89)-[ribosomal protein uS12]-hydrogen + (sulfur carrier)-SH + AH2 + 2 S-adenosyl-L-methionine = 3-methylsulfanyl-L-aspartate(89)-[ribosomal protein uS12]-hydrogen + (sulfur carrier)-H + 5'-deoxyadenosine + L-methionine + A + S-adenosyl-L-homocysteine + 2 H(+). Its function is as follows. Catalyzes the methylthiolation of an aspartic acid residue of ribosomal protein uS12. The sequence is that of Ribosomal protein uS12 methylthiotransferase RimO from Synechocystis sp. (strain ATCC 27184 / PCC 6803 / Kazusa).